The primary structure comprises 173 residues: Sporulation-specific protein 12 (173 aa).

Polar residues predominate over residues 1–12; it reads MSNKASDQSART. Residues 1 to 56 are disordered; it reads MSNKASDQSARTASILKTDITRENTITRSSSSNNDNYHHHNNINNYNESAKTGEDA. S2 carries the N-acetylserine modification. Phosphoserine occurs at positions 118 and 125. Residues 159–173 form a negative-charged tail region; the sequence is DSEDVEIDEDEEYFY.

Its function is as follows. It is required for meiosis I chromosome division during sporulation. A component of the FEAR (CDC14 early anaphase release) network which promotes CDC14 release from the nucleolus during early anaphase. This Saccharomyces cerevisiae (strain ATCC 204508 / S288c) (Baker's yeast) protein is Sporulation-specific protein 12 (SPO12).